Consider the following 478-residue polypeptide: Ribosomal RNA small subunit methyltransferase F (478 aa).

Residues 126–132 (AAAPGSK), glutamate 150, aspartate 177, and aspartate 195 contribute to the S-adenosyl-L-methionine site. Cysteine 248 acts as the Nucleophile in catalysis.

Belongs to the class I-like SAM-binding methyltransferase superfamily. RsmB/NOP family.

It is found in the cytoplasm. The enzyme catalyses cytidine(1407) in 16S rRNA + S-adenosyl-L-methionine = 5-methylcytidine(1407) in 16S rRNA + S-adenosyl-L-homocysteine + H(+). In terms of biological role, specifically methylates the cytosine at position 1407 (m5C1407) of 16S rRNA. The polypeptide is Ribosomal RNA small subunit methyltransferase F (Erwinia tasmaniensis (strain DSM 17950 / CFBP 7177 / CIP 109463 / NCPPB 4357 / Et1/99)).